The primary structure comprises 575 residues: Phosphoenolpyruvate-protein phosphotransferase (575 aa).

The Tele-phosphohistidine intermediate role is filled by His-189. Residues Arg-296 and Arg-332 each contribute to the phosphoenolpyruvate site. Glu-431 and Asp-455 together coordinate Mg(2+). Phosphoenolpyruvate-binding positions include 454–455 (ND) and Arg-465. Residue Cys-502 is the Proton donor of the active site.

Belongs to the PEP-utilizing enzyme family. In terms of assembly, homodimer. Mg(2+) serves as cofactor.

Its subcellular location is the cytoplasm. The enzyme catalyses L-histidyl-[protein] + phosphoenolpyruvate = N(pros)-phospho-L-histidyl-[protein] + pyruvate. General (non sugar-specific) component of the phosphoenolpyruvate-dependent sugar phosphotransferase system (sugar PTS). This major carbohydrate active-transport system catalyzes the phosphorylation of incoming sugar substrates concomitantly with their translocation across the cell membrane. Enzyme I transfers the phosphoryl group from phosphoenolpyruvate (PEP) to the phosphoryl carrier protein (HPr). In Salmonella typhimurium (strain LT2 / SGSC1412 / ATCC 700720), this protein is Phosphoenolpyruvate-protein phosphotransferase (ptsI).